The following is a 403-amino-acid chain: Acetylornithine aminotransferase (403 aa).

Pyridoxal 5'-phosphate is bound by residues 107-108 (GA) and phenylalanine 140. A N(2)-acetyl-L-ornithine-binding site is contributed by arginine 143. 225–228 (DEVQ) serves as a coordination point for pyridoxal 5'-phosphate. At lysine 254 the chain carries N6-(pyridoxal phosphate)lysine. Serine 282 serves as a coordination point for N(2)-acetyl-L-ornithine. A pyridoxal 5'-phosphate-binding site is contributed by threonine 283.

Belongs to the class-III pyridoxal-phosphate-dependent aminotransferase family. ArgD subfamily. In terms of assembly, homodimer. Pyridoxal 5'-phosphate is required as a cofactor.

It is found in the cytoplasm. It carries out the reaction N(2)-acetyl-L-ornithine + 2-oxoglutarate = N-acetyl-L-glutamate 5-semialdehyde + L-glutamate. Its pathway is amino-acid biosynthesis; L-arginine biosynthesis; N(2)-acetyl-L-ornithine from L-glutamate: step 4/4. This is Acetylornithine aminotransferase from Vibrio cholerae serotype O1 (strain ATCC 39315 / El Tor Inaba N16961).